A 154-amino-acid chain; its full sequence is UPF0225 protein Asuc_0343 (154 aa).

Belongs to the UPF0225 family.

In Actinobacillus succinogenes (strain ATCC 55618 / DSM 22257 / CCUG 43843 / 130Z), this protein is UPF0225 protein Asuc_0343.